A 93-amino-acid polypeptide reads, in one-letter code: Parbolysin P5 (93 aa).

Disulfide bonds link Cys-16/Cys-37, Cys-22/Cys-33, and Cys-47/Cys-60.

The protein belongs to the worm cytolysin family. As to expression, localized within the skin and proboscis and are most readily isolated from body mucus secretions.

The protein resides in the secreted. Its function is as follows. Cytolysin that shows hemolytic activity (on bovine erythrocytes, HC(50)=5.75 mg/ml). This hemolytic activity is completely inhibited by small unilamelar vesicles composed of PC/PG, PC/PI and PC/PS in 1:1 molar ratios (with at least 100 mg/ml concentration). The protein is Parbolysin P5 of Parborlasia corrugatus (Antarctic nemertean worm).